Here is a 65-residue protein sequence, read N- to C-terminus: Large ribosomal subunit protein bL35 (65 aa).

This sequence belongs to the bacterial ribosomal protein bL35 family.

This chain is Large ribosomal subunit protein bL35, found in Yersinia enterocolitica serotype O:8 / biotype 1B (strain NCTC 13174 / 8081).